The following is a 432-amino-acid chain: MNLKDPICAIATPPGKGAIGVVRLSGEGALEIAARVWRGKDPRRLKGGRFALGEVVDPKTGEAIDQAILLVFRAPRSYTGEDLVEFQTHGSPAVLRRVMEVLVAEGARPAGRGEFTFRAYLNGKMDLAQAEAVLALIEAEGELARRQALRALEGALSRRIEALENRLLNLLAHIQALLDYPEEGVEPLEAERTIREVLAEVEALLAQAKASRLAQKGARLALIGAPNAGKSSLLNALLGYERALVSPIPGTTRDYLEAPLELFGIPLVAVDTAGVRETEDPVERMGVERALGIAEEADLVLYVVDRSQPKPAPPPLPWARTLKVATKSDLPPAWEDPEFLPVSSLTGEGLDRLKEAVREALLGREGGEVLLTERQVEALLRARERLEEALSLPEDLMGLALEEAARALALLTGKEVAEEVVARVFQNFCVGK.

(6S)-5-formyl-5,6,7,8-tetrahydrofolate-binding residues include Arg23, Glu85, and Lys124. Residues 217 to 362 (GARLALIGAP…LKEAVREALL (146 aa)) form the TrmE-type G domain. A K(+)-binding site is contributed by Asn227. Residues 227-232 (NAGKSS), 246-252 (SPIPGTT), and 271-274 (DTAG) contribute to the GTP site. Ser231 provides a ligand contact to Mg(2+). Positions 246, 248, and 251 each coordinate K(+). Thr252 is a binding site for Mg(2+). Lys432 provides a ligand contact to (6S)-5-formyl-5,6,7,8-tetrahydrofolate.

It belongs to the TRAFAC class TrmE-Era-EngA-EngB-Septin-like GTPase superfamily. TrmE GTPase family. In terms of assembly, homodimer. Heterotetramer of two MnmE and two MnmG subunits. Requires K(+) as cofactor.

The protein localises to the cytoplasm. Exhibits a very high intrinsic GTPase hydrolysis rate. Involved in the addition of a carboxymethylaminomethyl (cmnm) group at the wobble position (U34) of certain tRNAs, forming tRNA-cmnm(5)s(2)U34. This is tRNA modification GTPase MnmE from Thermus thermophilus (strain ATCC 27634 / DSM 579 / HB8).